The chain runs to 146 residues: MMDINEIREYLPHRYPFLLVDRVTDLDFEAQSIRAYKNVSINEPFFNGHFPAHPIMPGVLIIEAMAQAAGILGFKMLDAKPADGTLYYFVGSDKLRFRQPVLPGDQLVLEAKFLSRKSMIWKFECRALVDGKPVCSAEITCAERSL.

Histidine 49 is a catalytic residue.

Belongs to the thioester dehydratase family. FabZ subfamily.

It is found in the cytoplasm. It catalyses the reaction a (3R)-hydroxyacyl-[ACP] = a (2E)-enoyl-[ACP] + H2O. Functionally, involved in unsaturated fatty acids biosynthesis. Catalyzes the dehydration of short chain beta-hydroxyacyl-ACPs and long chain saturated and unsaturated beta-hydroxyacyl-ACPs. In Pseudomonas putida (strain ATCC 700007 / DSM 6899 / JCM 31910 / BCRC 17059 / LMG 24140 / F1), this protein is 3-hydroxyacyl-[acyl-carrier-protein] dehydratase FabZ.